The sequence spans 274 residues: 2-succinyl-6-hydroxy-2,4-cyclohexadiene-1-carboxylate synthase (274 aa).

This sequence belongs to the AB hydrolase superfamily. MenH family. As to quaternary structure, monomer.

It catalyses the reaction 5-enolpyruvoyl-6-hydroxy-2-succinyl-cyclohex-3-ene-1-carboxylate = (1R,6R)-6-hydroxy-2-succinyl-cyclohexa-2,4-diene-1-carboxylate + pyruvate. Its pathway is quinol/quinone metabolism; 1,4-dihydroxy-2-naphthoate biosynthesis; 1,4-dihydroxy-2-naphthoate from chorismate: step 3/7. It participates in quinol/quinone metabolism; menaquinone biosynthesis. In terms of biological role, catalyzes a proton abstraction reaction that results in 2,5-elimination of pyruvate from 2-succinyl-5-enolpyruvyl-6-hydroxy-3-cyclohexene-1-carboxylate (SEPHCHC) and the formation of 2-succinyl-6-hydroxy-2,4-cyclohexadiene-1-carboxylate (SHCHC). The polypeptide is 2-succinyl-6-hydroxy-2,4-cyclohexadiene-1-carboxylate synthase (Yersinia enterocolitica serotype O:8 / biotype 1B (strain NCTC 13174 / 8081)).